We begin with the raw amino-acid sequence, 616 residues long: Adenylosuccinate synthetase 1 (616 aa).

A disordered region spans residues 1–27 (MDKQAERGQSAGPVKTPQGTQPPAHNY). Residues 17–27 (PQGTQPPAHNY) are compositionally biased toward polar residues. GTP contacts are provided by residues 87–93 (GDEGKGK) and 117–119 (GHT). The active-site Proton acceptor is aspartate 88. Mg(2+) is bound by residues aspartate 88 and glycine 117. Residues 88–91 (DEGK), 115–118 (NAGH), threonine 202, lysine 216, glutamine 328, threonine 343, and lysine 472 contribute to the IMP site. Histidine 118 serves as the catalytic Proton donor. Position 468 to 474 (468 to 474 (AVTKKPR)) interacts with substrate. GTP is bound by residues arginine 474 and 603–605 (GNG).

The protein belongs to the adenylosuccinate synthetase family. Homodimer. Requires Mg(2+) as cofactor.

Its subcellular location is the cytoplasm. The enzyme catalyses IMP + L-aspartate + GTP = N(6)-(1,2-dicarboxyethyl)-AMP + GDP + phosphate + 2 H(+). Its pathway is purine metabolism; AMP biosynthesis via de novo pathway; AMP from IMP: step 1/2. Its function is as follows. Plays an important role in the salvage pathway for purine nucleotide biosynthesis. Catalyzes the first committed step in the biosynthesis of AMP from IMP. This chain is Adenylosuccinate synthetase 1, found in Trypanosoma cruzi (strain CL Brener).